The primary structure comprises 273 residues: Large ribosomal subunit protein uL2cy (273 aa).

Disordered regions lie at residues 1-27 (MAIH…SNPR) and 224-273 (NPVD…RRRK).

Belongs to the universal ribosomal protein uL2 family. As to quaternary structure, part of the 50S ribosomal subunit.

It is found in the plastid. The protein resides in the chloroplast. The protein is Large ribosomal subunit protein uL2cy (rpl2-B) of Liriodendron tulipifera (Tuliptree).